Here is a 414-residue protein sequence, read N- to C-terminus: Tryptophan synthase beta chain (414 aa).

Residues 1 to 26 (MVSTFSRKDQNYKNDDLNQPSKEGRF) are compositionally biased toward basic and acidic residues. Positions 1 to 27 (MVSTFSRKDQNYKNDDLNQPSKEGRFG) are disordered. K109 bears the N6-(pyridoxal phosphate)lysine mark.

The protein belongs to the TrpB family. In terms of assembly, tetramer of two alpha and two beta chains. The cofactor is pyridoxal 5'-phosphate.

The enzyme catalyses (1S,2R)-1-C-(indol-3-yl)glycerol 3-phosphate + L-serine = D-glyceraldehyde 3-phosphate + L-tryptophan + H2O. Its pathway is amino-acid biosynthesis; L-tryptophan biosynthesis; L-tryptophan from chorismate: step 5/5. The beta subunit is responsible for the synthesis of L-tryptophan from indole and L-serine. This Prochlorococcus marinus (strain MIT 9301) protein is Tryptophan synthase beta chain.